A 499-amino-acid polypeptide reads, in one-letter code: Bestrophin homolog 22 (499 aa).

The next 4 membrane-spanning stretches (helical) occupy residues 29–49, 77–97, 235–255, and 267–287; these read WKAVFGQLAVWTAVFLLISCI, IPLTFLLGFFVSFVVARWGSI, LVYPQVIFLAVRIYFMICLIG, and GIDLWLPITTMVQFLVYMGWM. Residues 417-432 show a composition bias toward basic and acidic residues; the sequence is HNAKHAKQRGLERANS. 2 disordered regions span residues 417 to 455 and 474 to 499; these read HNAKHAKQRGLERANSPDKCLSKMRSRSNGKFRTSANGS and TSNPNQVHPHSIAVFPPEEQQTTSRH.

This sequence belongs to the anion channel-forming bestrophin (TC 1.A.46) family. Calcium-sensitive chloride channel subfamily. In terms of assembly, forms oligomers.

The protein localises to the cell membrane. Functionally, forms chloride channels. This Caenorhabditis elegans protein is Bestrophin homolog 22 (best-22).